The chain runs to 246 residues: Ribosomal RNA small subunit methyltransferase G (246 aa).

S-adenosyl-L-methionine contacts are provided by residues G81, F86, 137–138 (AE), and R156. The segment at 221–246 (LVLIRKERPTPKAYPRRAGVPAKSPL) is disordered.

This sequence belongs to the methyltransferase superfamily. RNA methyltransferase RsmG family.

It is found in the cytoplasm. Specifically methylates the N7 position of a guanine in 16S rRNA. The protein is Ribosomal RNA small subunit methyltransferase G of Symbiobacterium thermophilum (strain DSM 24528 / JCM 14929 / IAM 14863 / T).